A 153-amino-acid polypeptide reads, in one-letter code: Endoribonuclease YbeY (153 aa).

3 residues coordinate Zn(2+): His-118, His-122, and His-128.

This sequence belongs to the endoribonuclease YbeY family. It depends on Zn(2+) as a cofactor.

It localises to the cytoplasm. In terms of biological role, single strand-specific metallo-endoribonuclease involved in late-stage 70S ribosome quality control and in maturation of the 3' terminus of the 16S rRNA. The protein is Endoribonuclease YbeY of Staphylococcus haemolyticus (strain JCSC1435).